The chain runs to 143 residues: Fluoride-specific ion channel FluC 1 (143 aa).

4 consecutive transmembrane segments (helical) span residues 13 to 33, 42 to 62, 80 to 100, and 111 to 131; these read VLVG…SVIA, GVPW…ATLL, LCIG…TVEA, and WGIA…WVVI. Positions 88 and 91 each coordinate Na(+).

Belongs to the fluoride channel Fluc/FEX (TC 1.A.43) family.

The protein localises to the cell membrane. The catalysed reaction is fluoride(in) = fluoride(out). Its activity is regulated as follows. Na(+) is not transported, but it plays an essential structural role and its presence is essential for fluoride channel function. Functionally, fluoride-specific ion channel. Important for reducing fluoride concentration in the cell, thus reducing its toxicity. The sequence is that of Fluoride-specific ion channel FluC 1 from Cutibacterium acnes (strain DSM 16379 / KPA171202) (Propionibacterium acnes).